The primary structure comprises 112 residues: Protein FAM32A (112 aa).

The tract at residues 23–56 (TKRKKKKKDKDKAKMLEAMGTSKKNEEEKRRCLD) is disordered. A compositionally biased stretch (basic and acidic residues) spans 45 to 56 (KKNEEEKRRCLD).

The protein belongs to the FAM32 family.

It localises to the nucleus. May induce G2 arrest and apoptosis. May also increase cell sensitivity to apoptotic stimuli. The polypeptide is Protein FAM32A (Fam32a) (Rattus norvegicus (Rat)).